Reading from the N-terminus, the 442-residue chain is Membrane sensor protein UhpC (442 aa).

The Cytoplasmic segment spans residues 1 to 30 (MLSFLKAPANAPLITDKHEVDARYRYWRRH). A helical transmembrane segment spans residues 31–51 (ILITIWLGYALFYFTRKSFNA). Residues 52–66 (AAPEILASGILTRSD) lie on the Periplasmic side of the membrane. The chain crosses the membrane as a helical span at residues 67–87 (IGLLATLFYITYGVSKFVSGI). Over 88–95 (VSDRSNAR) the chain is Cytoplasmic. The helical transmembrane segment at 96–118 (YFMGIGLIATGVVNILFGFSTSL) threads the bilayer. The Periplasmic segment spans residues 119 to 121 (WAF). Residues 122–144 (ALLWALNAFFQGFGSPVCARLLT) traverse the membrane as a helical segment. At 145–162 (AWYSRTERGGWWALWNTA) the chain is on the cytoplasmic side. A helical transmembrane segment spans residues 163-183 (HNVGGALIPLVMAAVALHYGW). Position 184 (Arg-184) is a topological domain, periplasmic. The chain crosses the membrane as a helical span at residues 185-205 (VGMMVAGLLAIGVGMVLCWRL). Topologically, residues 206 to 244 (RDRPQAIGLPPVGDWRHDALEVAQQQEGAGLSRKEILAK) are cytoplasmic. The helical transmembrane segment at 245 to 265 (YVLLNPYIWLLSLCYVLVYVV) threads the bilayer. The Periplasmic portion of the chain corresponds to 266–289 (RAAINDWGNLYMSETLGVDLVTAN). The chain crosses the membrane as a helical span at residues 290–310 (TAVSMFELGGFIGALVAGWGS). At 311–322 (DKLFNGNRGPMN) the chain is on the cytoplasmic side. Residues 323–343 (LIFAAGILLSVGSLWLMPFAS) form a helical membrane-spanning segment. Over 344–347 (YVMQ) the chain is Periplasmic. The chain crosses the membrane as a helical span at residues 348 to 368 (AACFFTTGFFVFGPQMLIGMA). Residues 369 to 379 (AAECSHKEAAG) are Cytoplasmic-facing. The chain crosses the membrane as a helical span at residues 380–400 (AATGFVGLFAYLGASLSGWPL). Residues 401-410 (AKVLEIWHWT) lie on the Periplasmic side of the membrane. A helical membrane pass occupies residues 411–431 (GFFAVIAIAAGISALLLLPFL). At 432–442 (NAQAPRETHEA) the chain is on the cytoplasmic side.

The protein belongs to the major facilitator superfamily. Organophosphate:Pi antiporter (OPA) (TC 2.A.1.4) family.

The protein resides in the cell inner membrane. In terms of biological role, part of the UhpABC signaling cascade that controls the expression of the hexose phosphate transporter UhpT. UhpC senses external glucose-6-phosphate and interacts with the histidine kinase UhpB, leading to the stimulation of the autokinase activity of UhpB. The chain is Membrane sensor protein UhpC (uhpC) from Salmonella typhimurium (strain LT2 / SGSC1412 / ATCC 700720).